The chain runs to 332 residues: Biotin synthase (332 aa).

The Radical SAM core domain maps to 51-279 (YKVQLASLLS…RSRVRLSAGR (229 aa)). The [4Fe-4S] cluster site is built by Cys-66, Cys-70, and Cys-73. Residues Cys-110, Cys-142, Cys-202, and Arg-274 each coordinate [2Fe-2S] cluster.

The protein belongs to the radical SAM superfamily. Biotin synthase family. In terms of assembly, homodimer. Requires [4Fe-4S] cluster as cofactor. It depends on [2Fe-2S] cluster as a cofactor.

The enzyme catalyses (4R,5S)-dethiobiotin + (sulfur carrier)-SH + 2 reduced [2Fe-2S]-[ferredoxin] + 2 S-adenosyl-L-methionine = (sulfur carrier)-H + biotin + 2 5'-deoxyadenosine + 2 L-methionine + 2 oxidized [2Fe-2S]-[ferredoxin]. It participates in cofactor biosynthesis; biotin biosynthesis; biotin from 7,8-diaminononanoate: step 2/2. Catalyzes the conversion of dethiobiotin (DTB) to biotin by the insertion of a sulfur atom into dethiobiotin via a radical-based mechanism. The sequence is that of Biotin synthase from Prochlorococcus marinus (strain SARG / CCMP1375 / SS120).